Here is a 376-residue protein sequence, read N- to C-terminus: Erythronate-4-phosphate dehydrogenase (376 aa).

2 residues coordinate substrate: Ser-45 and Thr-67. Asp-147 contacts NAD(+). Residue Arg-209 is part of the active site. Residue Asp-233 coordinates NAD(+). Glu-238 is an active-site residue. Residue His-255 is the Proton donor of the active site. Gly-258 serves as a coordination point for NAD(+). Tyr-259 is a substrate binding site.

This sequence belongs to the D-isomer specific 2-hydroxyacid dehydrogenase family. PdxB subfamily. Homodimer.

The protein resides in the cytoplasm. The catalysed reaction is 4-phospho-D-erythronate + NAD(+) = (R)-3-hydroxy-2-oxo-4-phosphooxybutanoate + NADH + H(+). Its pathway is cofactor biosynthesis; pyridoxine 5'-phosphate biosynthesis; pyridoxine 5'-phosphate from D-erythrose 4-phosphate: step 2/5. Functionally, catalyzes the oxidation of erythronate-4-phosphate to 3-hydroxy-2-oxo-4-phosphonooxybutanoate. This chain is Erythronate-4-phosphate dehydrogenase, found in Shewanella sp. (strain ANA-3).